A 158-amino-acid chain; its full sequence is Frataxin homolog, mitochondrial (158 aa).

The protein belongs to the frataxin family. In terms of assembly, monomer. Oligomer.

It is found in the mitochondrion. The catalysed reaction is 4 Fe(2+) + O2 + 4 H(+) = 4 Fe(3+) + 2 H2O. Functionally, promotes the biosynthesis of heme as well as the assembly and repair of iron-sulfur clusters by delivering Fe(2+) to proteins involved in these pathways. May play a role in the protection against iron-catalyzed oxidative stress through its ability to catalyze the oxidation of Fe(2+) to Fe(3+). May be able to store large amounts of the metal in the form of a ferrihydrite mineral by oligomerization. This Schizosaccharomyces pombe (strain 972 / ATCC 24843) (Fission yeast) protein is Frataxin homolog, mitochondrial.